Reading from the N-terminus, the 404-residue chain is Probable protein phosphatase 2C 30 (404 aa).

The span at 42–52 (AERGAEEETSG) shows a compositional bias: basic and acidic residues. Residues 42-72 (AERGAEEETSGKRRRLDGGGGEASTDEEDRE) form a disordered region. Residues 77–399 (RYGFTSVCGR…DNVSVVVVNL (323 aa)) enclose the PPM-type phosphatase domain. Residues aspartate 111, glycine 112, and aspartate 298 each coordinate Mn(2+). The interval 321-369 (GRRERNRSSPTSNLSPRQSSSSGDEAPNDGAPSAAAGSESDEESAAEED) is disordered. The segment covering 330–343 (PTSNLSPRQSSSSG) has biased composition (polar residues). Aspartate 390 is a binding site for Mn(2+).

The protein belongs to the PP2C family. Interacts with PYL5 and SAPK2. Binding to PYL5 is dependent on the presence of abscisic acid (ABA). Interacts with PYL3, PYL5 and PYL9. Binding to PYL5 and PYL9 is dependent on the presence of ABA. The cofactor is Mg(2+). Mn(2+) is required as a cofactor.

It localises to the nucleus. It carries out the reaction O-phospho-L-seryl-[protein] + H2O = L-seryl-[protein] + phosphate. The catalysed reaction is O-phospho-L-threonyl-[protein] + H2O = L-threonyl-[protein] + phosphate. In terms of biological role, together with ABI5, PYL5 and SAPK2, is part of an abscisic acid (ABA) signaling unit that modulates seed germination and early seedling growth. In Oryza sativa subsp. japonica (Rice), this protein is Probable protein phosphatase 2C 30.